A 200-amino-acid chain; its full sequence is Small ribosomal subunit protein uS4 (200 aa).

The interval 22–42 is disordered; that stretch reads TGKELEKRPYAPGPHGPGQRK. The S4 RNA-binding domain maps to 92–155; that stretch reads ARLDNVVYKL…RNLSIIKESV (64 aa).

It belongs to the universal ribosomal protein uS4 family. As to quaternary structure, part of the 30S ribosomal subunit. Contacts protein S5. The interaction surface between S4 and S5 is involved in control of translational fidelity.

In terms of biological role, one of the primary rRNA binding proteins, it binds directly to 16S rRNA where it nucleates assembly of the body of the 30S subunit. With S5 and S12 plays an important role in translational accuracy. The chain is Small ribosomal subunit protein uS4 from Bacillus velezensis (strain DSM 23117 / BGSC 10A6 / LMG 26770 / FZB42) (Bacillus amyloliquefaciens subsp. plantarum).